We begin with the raw amino-acid sequence, 587 residues long: Protein POF1B (587 aa).

Positions 331–529 (STFSNIREEL…EELSKLRQEI (199 aa)) form a coiled coil.

As to quaternary structure, interacts with nonmuscle actin. Expression absent in adult ovary.

The protein localises to the cell junction. It is found in the tight junction. Its function is as follows. Plays a key role in the organization of epithelial monolayers by regulating the actin cytoskeleton. May be involved in ovary development. This Mus musculus (Mouse) protein is Protein POF1B (Pof1b).